A 298-amino-acid chain; its full sequence is MWGACKVKVHDSLATISITLRRYLRLGATMAKSKFEYVRDFEADDTCLAHCWVVVRLDGRNFHRFAEKHNFAKPNDSRALQLMTKCAQTVMEELEDIVIAYGQSDEYSFVFKRKTNWFKRRASKFMTHVASQFASSYVFYWRDYFEDQPLLYPPGFDGRVVVYPSNQTLKDYLSWRQADCHINNLYNTVFWALIQQSGLTPVQAQGRLQGTLAADKNEILFSEFNINYNNELPMYRKGTVLIWQKVDEVMTKEIKLPTEMEGKKMAVTRTRTKPVPLHCDIIGDAFWKEHPEILDEDS.

Mg(2+) is bound by residues Asp58, Gly59, and Asp105. Residues 58 to 63 (DGRNFH) and 104 to 105 (SD) each bind GTP.

This sequence belongs to the tRNA(His) guanylyltransferase family. As to quaternary structure, homotetramer. Interacts with MFN1 and MFN2; functions as a guanyl-nucleotide exchange factor/GEF for MFN2 and also probably MFN1. Mg(2+) is required as a cofactor. As to expression, expressed in many tissues.

The protein localises to the cytoplasm. Its subcellular location is the mitochondrion outer membrane. It carries out the reaction a 5'-end ribonucleotide-tRNA(His) + GTP + ATP + H2O = a 5'-end phospho-guanosine-ribonucleotide-tRNA(His) + AMP + 2 diphosphate + H(+). Its function is as follows. Adds a GMP to the 5'-end of tRNA(His) after transcription and RNase P cleavage. This step is essential for proper recognition of the tRNA and for the fidelity of protein synthesis. Also functions as a guanyl-nucleotide exchange factor/GEF for the MFN1 and MFN2 mitofusins thereby regulating mitochondrial fusion. By regulating both mitochondrial dynamics and bioenergetic function, it contributes to cell survival following oxidative stress. The protein is Probable tRNA(His) guanylyltransferase (THG1L) of Homo sapiens (Human).